A 266-amino-acid chain; its full sequence is MKQAIGFIDSGVGGLTVVREVLKQLPHEQVYYLGDTARCPYGPRDKEEVAKFTWEMTNFLVDRGIKMLVIACNTATAAALYDIREKLDIPVIGVIQPGSRAALKATRNNKIGVLGTLGTVESMAYPTALKGLNRRVEVDSLACPKFVSVVESGEYKSAIAKKVVAESLLPLKSTKIDTVILGCTHYPLLKPIIENFMGDGVAVINSGEETASEVSALLDYHNLLDSTDEEIEHRFFTTGSTQIFKDIAKDWLNMPDMTVEHIKLGK.

Residues 9–10 (DS) and 41–42 (YG) contribute to the substrate site. Cys-72 acts as the Proton donor/acceptor in catalysis. 73–74 (NT) contributes to the substrate binding site. Residue Cys-183 is the Proton donor/acceptor of the active site. 184–185 (TH) is a substrate binding site.

The protein belongs to the aspartate/glutamate racemases family.

The enzyme catalyses L-glutamate = D-glutamate. The protein operates within cell wall biogenesis; peptidoglycan biosynthesis. Its function is as follows. Provides the (R)-glutamate required for cell wall biosynthesis. This is Glutamate racemase from Listeria monocytogenes serotype 4a (strain HCC23).